Here is a 273-residue protein sequence, read N- to C-terminus: Dermonecrotic toxin LapSicTox-alphaIB1ai (273 aa).

Residue His5 is part of the active site. 2 residues coordinate Mg(2+): Glu25 and Asp27. The active-site Nucleophile is His41. Intrachain disulfides connect Cys45–Cys51 and Cys47–Cys190. Position 85 (Asp85) interacts with Mg(2+). Residue Asn250 is glycosylated (N-linked (GlcNAc...) asparagine).

Belongs to the arthropod phospholipase D family. Class II subfamily. Requires Mg(2+) as cofactor. As to expression, expressed by the venom gland.

Its subcellular location is the secreted. It carries out the reaction an N-(acyl)-sphingosylphosphocholine = an N-(acyl)-sphingosyl-1,3-cyclic phosphate + choline. The enzyme catalyses an N-(acyl)-sphingosylphosphoethanolamine = an N-(acyl)-sphingosyl-1,3-cyclic phosphate + ethanolamine. It catalyses the reaction a 1-acyl-sn-glycero-3-phosphocholine = a 1-acyl-sn-glycero-2,3-cyclic phosphate + choline. The catalysed reaction is a 1-acyl-sn-glycero-3-phosphoethanolamine = a 1-acyl-sn-glycero-2,3-cyclic phosphate + ethanolamine. Its function is as follows. Dermonecrotic toxins cleave the phosphodiester linkage between the phosphate and headgroup of certain phospholipids (sphingolipid and lysolipid substrates), forming an alcohol (often choline) and a cyclic phosphate. This toxin acts on sphingomyelin (SM). It may also act on ceramide phosphoethanolamine (CPE), lysophosphatidylcholine (LPC) and lysophosphatidylethanolamine (LPE), but not on lysophosphatidylserine (LPS), and lysophosphatidylglycerol (LPG). It acts by transphosphatidylation, releasing exclusively cyclic phosphate products as second products. Induces dermonecrosis, hemolysis, increased vascular permeability, edema, inflammatory response, and platelet aggregation. The chain is Dermonecrotic toxin LapSicTox-alphaIB1ai from Loxosceles apachea (Apache recluse spider).